We begin with the raw amino-acid sequence, 575 residues long: Proline--tRNA ligase (575 aa).

Belongs to the class-II aminoacyl-tRNA synthetase family. ProS type 1 subfamily. As to quaternary structure, homodimer.

It localises to the cytoplasm. It carries out the reaction tRNA(Pro) + L-proline + ATP = L-prolyl-tRNA(Pro) + AMP + diphosphate. Functionally, catalyzes the attachment of proline to tRNA(Pro) in a two-step reaction: proline is first activated by ATP to form Pro-AMP and then transferred to the acceptor end of tRNA(Pro). As ProRS can inadvertently accommodate and process non-cognate amino acids such as alanine and cysteine, to avoid such errors it has two additional distinct editing activities against alanine. One activity is designated as 'pretransfer' editing and involves the tRNA(Pro)-independent hydrolysis of activated Ala-AMP. The other activity is designated 'posttransfer' editing and involves deacylation of mischarged Ala-tRNA(Pro). The misacylated Cys-tRNA(Pro) is not edited by ProRS. In Heliobacterium modesticaldum (strain ATCC 51547 / Ice1), this protein is Proline--tRNA ligase.